Reading from the N-terminus, the 76-residue chain is UPF0154 protein Exig_1099 (76 aa).

The chain crosses the membrane as a helical span at residues 4–24; the sequence is WIWILIALLCLVAGVALGFYI. The segment at 54-76 is disordered; the sequence is KPSQKKVNQVMRSMSGSMKSPKK.

It belongs to the UPF0154 family.

The protein localises to the cell membrane. The sequence is that of UPF0154 protein Exig_1099 from Exiguobacterium sibiricum (strain DSM 17290 / CCUG 55495 / CIP 109462 / JCM 13490 / 255-15).